The primary structure comprises 406 residues: ATP synthase subunit a (406 aa).

2 stretches are compositionally biased toward low complexity: residues 22–31 (AGEHGAPAPE) and 43–59 (DAAGAATDPHGAAAEHG). Positions 22–76 (AGEHGAPAPEVATPAEGHGARDAAGAATDPHGAAAEHGAAAHEDPAQHGAAGAEA) are disordered. 6 helical membrane-spanning segments follow: residues 151–171 (KHVVMMWIASAILLLVVFAAV), 209–229 (FVPYLVSAFFFILFLNLFGLV), 232–252 (AATATANISVTVMMAVFTFLI), 278–298 (LWPLWFIMIPVEFLGLFTKPF), 304–324 (LFANMVAGHFVILALLGLIFA), and 351–371 (VQAYIFTMLSSLFIGSVVAHH). Residues 375 to 406 (DEHEEHGHGAAATGGAHGSHGSHVAGASPGHG) are disordered. The span at 383-406 (GAAATGGAHGSHGSHVAGASPGHG) shows a compositional bias: low complexity.

This sequence belongs to the ATPase A chain family. As to quaternary structure, F-type ATPases have 2 components, CF(1) - the catalytic core - and CF(0) - the membrane proton channel. CF(1) has five subunits: alpha(3), beta(3), gamma(1), delta(1), epsilon(1). CF(0) has three main subunits: a(1), b(2) and c(9-12). The alpha and beta chains form an alternating ring which encloses part of the gamma chain. CF(1) is attached to CF(0) by a central stalk formed by the gamma and epsilon chains, while a peripheral stalk is formed by the delta and b chains.

The protein localises to the cell inner membrane. Its function is as follows. Key component of the proton channel; it plays a direct role in the translocation of protons across the membrane. In Anaeromyxobacter sp. (strain Fw109-5), this protein is ATP synthase subunit a.